A 247-amino-acid polypeptide reads, in one-letter code: Oocyte zinc finger protein XlCOF20 (247 aa).

C2H2-type zinc fingers lie at residues 6–28 (YDCRECGKRYTKRNNLYIHQRVH), 34–56 (FPCTECGKGFSHKSQLIIHQRVH), 62–84 (FICSECGKGFSKNYGLILHLRVH), 90–112 (FVCTECGQRFSKNNVLSMHQRVH), 118–140 (FTCTECGKRFSQKRQLNLHLRVH), 146–168 (FVCTECGKRFSKNDVLLIHLRVH), 174–196 (FMCADCGRCFSVSSSLKYHQRIC), and 225–247 (QSCAECGKCFSSNYNLSLHMRVH).

Belongs to the krueppel C2H2-type zinc-finger protein family.

The protein localises to the nucleus. In terms of biological role, may be involved in transcriptional regulation. The chain is Oocyte zinc finger protein XlCOF20 from Xenopus laevis (African clawed frog).